We begin with the raw amino-acid sequence, 469 residues long: Glutamate--tRNA ligase (469 aa).

Positions 9 to 19 match the 'HIGH' region motif; sequence PSPTGFLHVGG. 4 residues coordinate Zn(2+): C98, C100, C125, and D127. The 'KMSKS' region signature appears at 236–240; that stretch reads KLSKR. K239 lines the ATP pocket.

Belongs to the class-I aminoacyl-tRNA synthetase family. Glutamate--tRNA ligase type 1 subfamily. As to quaternary structure, monomer. Zn(2+) is required as a cofactor.

Its subcellular location is the cytoplasm. It carries out the reaction tRNA(Glu) + L-glutamate + ATP = L-glutamyl-tRNA(Glu) + AMP + diphosphate. Functionally, catalyzes the attachment of glutamate to tRNA(Glu) in a two-step reaction: glutamate is first activated by ATP to form Glu-AMP and then transferred to the acceptor end of tRNA(Glu). The chain is Glutamate--tRNA ligase from Shewanella sp. (strain ANA-3).